Consider the following 602-residue polypeptide: uncharacterized protein (602 aa).

Residues glutamine 51–aspartate 210 form the Helicase ATP-binding domain. Over residues proline 430–leucine 439 the composition is skewed to basic and acidic residues. 2 disordered regions span residues proline 430–glycine 452 and arginine 518–histidine 538. The span at lysine 523 to serine 534 shows a compositional bias: polar residues.

The protein to M.leprae ML1624.

This is an uncharacterized protein from Mycobacterium tuberculosis (strain CDC 1551 / Oshkosh).